Consider the following 66-residue polypeptide: Large ribosomal subunit protein uL29 (66 aa).

It belongs to the universal ribosomal protein uL29 family.

The polypeptide is Large ribosomal subunit protein uL29 (Thermococcus sibiricus (strain DSM 12597 / MM 739)).